Consider the following 152-residue polypeptide: Protein-export protein SecB (152 aa).

This sequence belongs to the SecB family. Homotetramer, a dimer of dimers. One homotetramer interacts with 1 SecA dimer.

It is found in the cytoplasm. In terms of biological role, one of the proteins required for the normal export of preproteins out of the cell cytoplasm. It is a molecular chaperone that binds to a subset of precursor proteins, maintaining them in a translocation-competent state. It also specifically binds to its receptor SecA. This Dechloromonas aromatica (strain RCB) protein is Protein-export protein SecB.